We begin with the raw amino-acid sequence, 198 residues long: Proteasome subunit beta 1 (198 aa).

Residues methionine 1–alanine 8 constitute a propeptide, removed in mature form; by autocatalysis. The Nucleophile role is filled by threonine 9.

It belongs to the peptidase T1B family. As to quaternary structure, the 20S proteasome core is composed of 14 alpha and 14 beta subunits that assemble into four stacked heptameric rings, resulting in a barrel-shaped structure. The two inner rings, each composed of seven catalytic beta subunits, are sandwiched by two outer rings, each composed of seven alpha subunits. The catalytic chamber with the active sites is on the inside of the barrel. Has a gated structure, the ends of the cylinder being occluded by the N-termini of the alpha-subunits. Is capped at one or both ends by the proteasome regulatory ATPase, PAN.

Its subcellular location is the cytoplasm. The enzyme catalyses Cleavage of peptide bonds with very broad specificity.. The formation of the proteasomal ATPase PAN-20S proteasome complex, via the docking of the C-termini of PAN into the intersubunit pockets in the alpha-rings, triggers opening of the gate for substrate entry. Interconversion between the open-gate and close-gate conformations leads to a dynamic regulation of the 20S proteasome proteolysis activity. Functionally, component of the proteasome core, a large protease complex with broad specificity involved in protein degradation. The sequence is that of Proteasome subunit beta 1 from Nitrosopumilus maritimus (strain SCM1).